Reading from the N-terminus, the 334-residue chain is Replication-associated protein (334 aa).

The 103-residue stretch at 9–111 folds into the CRESS-DNA virus Rep endonuclease domain; it reads RLQSKYVFLT…DGDIKTRGDF (103 aa). The RCR-1 motif lies at 16 to 19; sequence FLTY. The a divalent metal cation site is built by Glu50, His58, and His60. The RCR-2 motif lies at 58-60; that stretch reads HYH. The active-site For DNA cleavage activity is the Tyr98. An RCR-3 motif is present at residues 98–101; sequence YISK. Asp102 serves as a coordination point for a divalent metal cation. The segment at 160–172 is oligomerization; it reads SANKLFPPQPEQY. ATP is bound at residue 213–220; that stretch reads GPTRTGKT. Positions 236 to 254 are transactivation; the sequence is IDFTNYDEHATYNIIDDIP. The short motif at 276–286 is the Nuclear localization signal element; the sequence is KYGKKKKIKGG.

Belongs to the geminiviridae Rep protein family. As to quaternary structure, homooligomer. Rep binds to repeated DNA motifs (iterons). Forms the O-complex, which is a Rep-DNA complex involved in the initiation of RCR. Part of the C- and V-complexes which are RepA-Rep-DNA complexes involved in the c-sense and v-sense transcription. Mg(2+) is required as a cofactor. The cofactor is Mn(2+).

It is found in the host nucleus. In terms of biological role, essential for the replication of viral ssDNA. The closed circular ssDNA genome is first converted to a superhelical dsDNA. Rep binds a specific region at the genome origin of replication. It introduces an endonucleolytic nick within the conserved sequence 5'-TAATATTAC-3' in the intergenic region of the genome present in all geminiviruses, thereby initiating the rolling circle replication (RCR). Following cleavage, binds covalently to the 5'-phosphate of DNA as a tyrosyl ester. The cleavage gives rise to a free 3'-OH that serves as a primer for the cellular DNA polymerase. The polymerase synthesizes the (+) strand DNA by rolling circle mechanism. After one round of replication, a Rep-catalyzed nucleotidyl transfer reaction releases a circular single-stranded virus genome, thereby terminating the replication. Displays origin-specific DNA cleavage, nucleotidyl transferase, ATPase and helicase activities. Acts a an inhibitor of C-sense gene transcription. This is Replication-associated protein from Phaseolus vulgaris (Kidney bean).